A 407-amino-acid polypeptide reads, in one-letter code: Phosphonoacetate hydrolase (407 aa).

Zn(2+) is bound by residues aspartate 25, threonine 64, aspartate 202, histidine 206, aspartate 241, histidine 242, and histidine 368. Threonine 64 and aspartate 202 together coordinate substrate. Residues histidine 242 and histidine 368 each contribute to the substrate site.

It belongs to the alkaline phosphatase family. PhnA subfamily. In terms of assembly, homodimer. Requires Zn(2+) as cofactor.

The catalysed reaction is phosphonoacetate + H2O = acetate + phosphate + H(+). Completely inhibited by EDTA and 1,10-phenanthroline. Moderately inhibited by the phosphonocarboxylic acids phosphonoformate and 3-phosphonopropionate and the phosphonate herbicide glyphosate. Partially inhibited by the reducing agents sodium sulfide and dithiotheitol and the chelating agent iminodiacetate. Nonphosphonate analogs of phosphonoacetate, such as arsonoacetate, sulfonoacetate and malonate are poor inhibitors. Inorganic phosphate, acetate and the known phosphonotase inhibitor phosphite have little effect on activity. Not inhibited by the alkylphosphonic acids methylphosphonate and ethylphosphonate, or the aminoalkylphosphonates 2-aminoethylphosphonate, 3-aminopropylphosphonate and 4-aminobutylphosphonate. Fe(3+), Ca(2+), Mg(2+) and Cs(+) have no effect on activity. Activity is slightly increased by the aminoalkylphosphonates 1-aminoethylphosphonate, 1-aminobutylphosphonate, 2-amino-4-butylphosphonate. Activity is increased by Zn(2+), Mn(2+) and Co(2+), these 3 metal ions also allow recovery of activity after EDTA treatment. Specifically hydrolyzes phosphonoacetate. Does not have activity on other organophosphonates or acetates. The sequence is that of Phosphonoacetate hydrolase from Pseudomonas fluorescens.